The primary structure comprises 398 residues: Secreted aspartic protease 2 (398 aa).

A signal peptide spans 1-18 (MFLKNIFIALAIALLVDA). Positions 19–56 (TPTTTKRSAGFVALDFSVVKTPKAFPVTNGQEGKTSKR) are cleaved as a propeptide — activation peptide. A Peptidase A1 domain is found at 70 to 384 (YAADITVGSN…DLDDNEISLA (315 aa)). Residue aspartate 88 is part of the active site. 88–90 (DTG) contributes to the pepstatin A binding site. Residues cysteine 103 and cysteine 115 are joined by a disulfide bond. Residue 141 to 142 (GD) coordinates pepstatin A. Positions 247 and 270 each coordinate Zn(2+). Residue aspartate 274 is part of the active site. 274–278 (DSGTT) lines the pepstatin A pocket. Cysteine 312 and cysteine 350 form a disulfide bridge. Residues asparagine 313 and asparagine 321 are each glycosylated (N-linked (GlcNAc...) asparagine).

The protein belongs to the peptidase A1 family. As to quaternary structure, monomer.

It is found in the secreted. It carries out the reaction Preferential cleavage at the carboxyl of hydrophobic amino acids, but fails to cleave 15-Leu-|-Tyr-16, 16-Tyr-|-Leu-17 and 24-Phe-|-Phe-25 of insulin B chain. Activates trypsinogen, and degrades keratin.. In terms of biological role, secreted aspartic peptidases (SAPs) are a group of ten acidic hydrolases considered as key virulence factors. These enzymes supply the fungus with nutrient amino acids as well as are able to degrade the selected host's proteins involved in the immune defense. Induces host inflammatory cytokine production in a proteolytic activity-independent way. Plays a role in tissue damage during superficial infection. Moreover, acts toward human hemoglobin though limited proteolysis to generate a variety of antimicrobial hemocidins, enabling to compete with the other microorganisms of the same physiological niche using the microbicidal peptides generated from the host protein. Functionally, plays a key role in defense against host by cleaving histatin-5 (Hst 5), a peptide from human saliva that carries out fungicidal activity. The cleavage rate decreases in an order of SAP2 &gt; SAP9 &gt; SAP3 &gt; SAP7 &gt; SAP4 &gt; SAP1 &gt; SAP8. The first cleavage occurs between residues 'Lys-17' and 'His-18' of Hst 5, giving DSHAKRHHGYKRKFHEK and HHSHRGY peptides. Simultaneously, the DSHAKRHHGYKRK peptide is also formed. Further fragmentation by SAP2 results in FHEK and DSHAKRHHGY products. The chain is Secreted aspartic protease 2 from Candida albicans (Yeast).